Reading from the N-terminus, the 300-residue chain is Ribosomal protein L11 methyltransferase (300 aa).

Positions 152, 173, 195, and 234 each coordinate S-adenosyl-L-methionine.

The protein belongs to the methyltransferase superfamily. PrmA family.

Its subcellular location is the cytoplasm. It catalyses the reaction L-lysyl-[protein] + 3 S-adenosyl-L-methionine = N(6),N(6),N(6)-trimethyl-L-lysyl-[protein] + 3 S-adenosyl-L-homocysteine + 3 H(+). Methylates ribosomal protein L11. This chain is Ribosomal protein L11 methyltransferase, found in Burkholderia ambifaria (strain ATCC BAA-244 / DSM 16087 / CCUG 44356 / LMG 19182 / AMMD) (Burkholderia cepacia (strain AMMD)).